A 271-amino-acid polypeptide reads, in one-letter code: Regulatory protein RecX (271 aa).

Belongs to the RecX family.

It localises to the cytoplasm. In terms of biological role, modulates RecA activity. The polypeptide is Regulatory protein RecX (Lactobacillus delbrueckii subsp. bulgaricus (strain ATCC BAA-365 / Lb-18)).